Consider the following 371-residue polypeptide: Protein NDRG2 (371 aa).

Residues 1–21 (MAELQEVQITEEKPLLPGQTP) are disordered. At Ala-2 the chain carries N-acetylalanine. Thr-20 carries the phosphothreonine modification. Phosphoserine is present on residues Ser-326 and Ser-328. Thr-330 is subject to Phosphothreonine. Phosphoserine is present on Ser-332. A Phosphothreonine modification is found at Thr-334. A disordered region spans residues 334 to 371 (TSAASVDGNRSRSRTLSQSSESGTLSSGPPGHTMEVSC). Ser-335, Ser-338, and Ser-344 each carry phosphoserine. Low complexity predominate over residues 347–361 (RTLSQSSESGTLSSG). The residue at position 348 (Thr-348) is a Phosphothreonine. A phosphoserine mark is found at Ser-350, Ser-352, Ser-353, and Ser-355. Thr-357 carries the post-translational modification Phosphothreonine. The residue at position 370 (Ser-370) is a Phosphoserine.

It belongs to the NDRG family. Interacts with CTNNB1. In terms of tissue distribution, highly expressed in brain, heart, skeletal muscle and salivary gland, and moderately in kidney and liver. Expressed in dendritic cells, but not in other blood cells. Expression levels are low in pancreatic and liver cancer tissues; absent in meningioma. Expressed in low-grade gliomas but present at low levels in glioblastoma. Isoform 1 and isoform 2 are present in brain neurons and up-regulated in Alzheimer disease (at protein level).

It is found in the cytoplasm. It localises to the perinuclear region. The protein resides in the cell projection. Its subcellular location is the growth cone. Its function is as follows. Contributes to the regulation of the Wnt signaling pathway. Down-regulates CTNNB1-mediated transcriptional activation of target genes, such as CCND1, and may thereby act as tumor suppressor. May be involved in dendritic cell and neuron differentiation. This chain is Protein NDRG2 (NDRG2), found in Homo sapiens (Human).